The sequence spans 660 residues: tRNA 5-methylaminomethyl-2-thiouridine biosynthesis bifunctional protein MnmC (660 aa).

The interval 1-242 is tRNA (mnm(5)s(2)U34)-methyltransferase; sequence MTDRIVPATL…KRAMLVGEFA (242 aa). The tract at residues 266-660 is FAD-dependent cmnm(5)s(2)U34 oxidoreductase; that stretch reads IGAGLAGCAV…VRALRHGRVA (395 aa).

It in the N-terminal section; belongs to the methyltransferase superfamily. tRNA (mnm(5)s(2)U34)-methyltransferase family. In the C-terminal section; belongs to the DAO family. FAD is required as a cofactor.

It localises to the cytoplasm. It catalyses the reaction 5-aminomethyl-2-thiouridine(34) in tRNA + S-adenosyl-L-methionine = 5-methylaminomethyl-2-thiouridine(34) in tRNA + S-adenosyl-L-homocysteine + H(+). Functionally, catalyzes the last two steps in the biosynthesis of 5-methylaminomethyl-2-thiouridine (mnm(5)s(2)U) at the wobble position (U34) in tRNA. Catalyzes the FAD-dependent demodification of cmnm(5)s(2)U34 to nm(5)s(2)U34, followed by the transfer of a methyl group from S-adenosyl-L-methionine to nm(5)s(2)U34, to form mnm(5)s(2)U34. The protein is tRNA 5-methylaminomethyl-2-thiouridine biosynthesis bifunctional protein MnmC of Burkholderia pseudomallei (strain 1710b).